Reading from the N-terminus, the 61-residue chain is Arabinogalactan protein 15 (61 aa).

The N-terminal stretch at 1–22 (MAISKASIVVLMMVIISVVASA) is a signal peptide. Position 23 is a pyrrolidone carboxylic acid (Gln-23). Pro-27, Pro-29, and Pro-31 each carry 4-hydroxyproline. Residues Pro-27, Pro-29, and Pro-31 are each glycosylated (O-linked (Ara...) hydroxyproline). Ser-35 is lipidated: GPI-anchor amidated serine. The propeptide at 36–61 (SAISASFVSAGVAAVAALVFGSALRI) is removed in mature form.

This sequence belongs to the AG-peptide AGP family. In terms of processing, contains 4-hydroxyproline; hydroxylated on Pro-27, Pro-29 and Pro-31. O-glycosylated on hydroxyprolines; noncontiguous hydroxylproline residues are glycosylated with arabinogalactan. In terms of tissue distribution, expressed in reproductive tissues. Expressed in chalaza, funiculus, stigma, septum, style, integument and transmitting tract.

The protein localises to the cell membrane. In terms of biological role, proteoglycan that seems to be implicated in diverse developmental roles such as differentiation, cell-cell recognition, embryogenesis and programmed cell death. This Arabidopsis thaliana (Mouse-ear cress) protein is Arabinogalactan protein 15.